The sequence spans 580 residues: 2-succinyl-5-enolpyruvyl-6-hydroxy-3-cyclohexene-1-carboxylate synthase (580 aa).

The protein belongs to the TPP enzyme family. MenD subfamily. In terms of assembly, homodimer. The cofactor is Mg(2+). Mn(2+) serves as cofactor. Requires thiamine diphosphate as cofactor.

It catalyses the reaction isochorismate + 2-oxoglutarate + H(+) = 5-enolpyruvoyl-6-hydroxy-2-succinyl-cyclohex-3-ene-1-carboxylate + CO2. It participates in quinol/quinone metabolism; 1,4-dihydroxy-2-naphthoate biosynthesis; 1,4-dihydroxy-2-naphthoate from chorismate: step 2/7. It functions in the pathway quinol/quinone metabolism; menaquinone biosynthesis. In terms of biological role, catalyzes the thiamine diphosphate-dependent decarboxylation of 2-oxoglutarate and the subsequent addition of the resulting succinic semialdehyde-thiamine pyrophosphate anion to isochorismate to yield 2-succinyl-5-enolpyruvyl-6-hydroxy-3-cyclohexene-1-carboxylate (SEPHCHC). The polypeptide is 2-succinyl-5-enolpyruvyl-6-hydroxy-3-cyclohexene-1-carboxylate synthase (Listeria innocua serovar 6a (strain ATCC BAA-680 / CLIP 11262)).